We begin with the raw amino-acid sequence, 99 residues long: Bacterial microcompartment shell vertex protein EutN (99 aa).

Positions 5 to 87 constitute a BMV domain; sequence MKLAVVTGQI…VDLCVIGIVD (83 aa).

It belongs to the CcmL/EutN family. Homopentamer with a small central pore.

It localises to the bacterial microcompartment. The protein operates within amine and polyamine degradation; ethanolamine degradation. Probably forms vertices in the bacterial microcompartment (BMC) shell dedicated to ethanolamine degradation. Expression of eutK, eutL, eutM, eutN, eutS (eutSMNLK) in E.coli leads to formation of a single BMC. Coexpression of eutQ with eutSMNLK permits E.coli to make cells with more than one mobile BMC, as is usual in vivo. It may be involved in transporting positively charged molecules into and out of the BMC. Functionally, the ethanolamine (EA) catabolic bacterial microcompartment (BMC) probably concentrates low levels of ethanolamine catabolic enzymes, concentrates volatile reaction intermediates, keeps the level of toxic acetaldehyde low, generates enough acetyl-CoA to support cell growth, and maintains a pool of free coenzyme A (CoA) and NAD. In terms of biological role, expression of the eut operon allows this bacteria to use ethanolamine (EA) as a carbon, nitrogen and energy source. It relies on cobalamin (vitamin B12) both as a cofactor for the ethanolamine ammonia-lyase (EAL) activity and to induce the operon. EA enhances bacterial survival in macrophages in a concentration-dependent manner, suggesting it is an important nutrient during infection. The sequence is that of Bacterial microcompartment shell vertex protein EutN from Salmonella typhimurium (strain LT2 / SGSC1412 / ATCC 700720).